The chain runs to 331 residues: Tetraacyldisaccharide 4'-kinase (331 aa).

Residue 55–62 coordinates ATP; sequence SVGGNGKT.

Belongs to the LpxK family.

It carries out the reaction a lipid A disaccharide + ATP = a lipid IVA + ADP + H(+). Its pathway is glycolipid biosynthesis; lipid IV(A) biosynthesis; lipid IV(A) from (3R)-3-hydroxytetradecanoyl-[acyl-carrier-protein] and UDP-N-acetyl-alpha-D-glucosamine: step 6/6. Transfers the gamma-phosphate of ATP to the 4'-position of a tetraacyldisaccharide 1-phosphate intermediate (termed DS-1-P) to form tetraacyldisaccharide 1,4'-bis-phosphate (lipid IVA). The chain is Tetraacyldisaccharide 4'-kinase from Aeromonas salmonicida (strain A449).